The primary structure comprises 150 residues: D-aminoacyl-tRNA deacylase (150 aa).

The short motif at 138–139 (GP) is the Gly-cisPro motif, important for rejection of L-amino acids element.

This sequence belongs to the DTD family. Homodimer.

The protein resides in the cytoplasm. The catalysed reaction is glycyl-tRNA(Ala) + H2O = tRNA(Ala) + glycine + H(+). It carries out the reaction a D-aminoacyl-tRNA + H2O = a tRNA + a D-alpha-amino acid + H(+). In terms of biological role, an aminoacyl-tRNA editing enzyme that deacylates mischarged D-aminoacyl-tRNAs. Also deacylates mischarged glycyl-tRNA(Ala), protecting cells against glycine mischarging by AlaRS. Acts via tRNA-based rather than protein-based catalysis; rejects L-amino acids rather than detecting D-amino acids in the active site. By recycling D-aminoacyl-tRNA to D-amino acids and free tRNA molecules, this enzyme counteracts the toxicity associated with the formation of D-aminoacyl-tRNA entities in vivo and helps enforce protein L-homochirality. The chain is D-aminoacyl-tRNA deacylase from Dechloromonas aromatica (strain RCB).